Here is a 239-residue protein sequence, read N- to C-terminus: Peptidyl-tRNA hydrolase (239 aa).

Tyr14 contacts tRNA. His19 functions as the Proton acceptor in the catalytic mechanism. The tRNA site is built by Phe64, Asn66, and Asn112. A disordered region spans residues 188-225 (GGKPDAEEPQAPKKQVGQSHIHKARNAAQPKKLPATGP).

It belongs to the PTH family. Monomer.

Its subcellular location is the cytoplasm. The enzyme catalyses an N-acyl-L-alpha-aminoacyl-tRNA + H2O = an N-acyl-L-amino acid + a tRNA + H(+). Functionally, hydrolyzes ribosome-free peptidyl-tRNAs (with 1 or more amino acids incorporated), which drop off the ribosome during protein synthesis, or as a result of ribosome stalling. Catalyzes the release of premature peptidyl moieties from peptidyl-tRNA molecules trapped in stalled 50S ribosomal subunits, and thus maintains levels of free tRNAs and 50S ribosomes. The chain is Peptidyl-tRNA hydrolase from Sinorhizobium fredii (strain NBRC 101917 / NGR234).